Reading from the N-terminus, the 495-residue chain is MAVNVRDYIAENYGLFINGEFVKGSSDETIEVTNPATGETLSHITRAKDKDVDHAVKVAQEAFESWSLTSKSERAQMLRDIGDKLMAQKDKIAMIETLNNGKPIRETTAIDIPFAARHFHYFASVIETEEGTVNDIDKDTMSIVRHEPIGVVGAVVAWNFPMLLAAWKIAPAIAAGNTIVIQPSSSTPLSLLEVAKIFQEVLPNGVVNILTGKGSESGNAIFNHDGVDKLSFTGSTDVGYQVAEAAAKHLVPATLELGGKSANIILDDANLDLAVEGIQLGILFNQGEVCSAGSRLLVHEKIYDQLVPRLQEAFSNIKVGDPQDEATQMGSQTGKDQLDKIQSYIDAAKESDAQILAGGHRLTENGLDKGFFFEPTLIAVPDNHHKLAQEEIFGPVLTVIKVKDDQEAIDIANDSEYGLAGGVFSQNITRALNIAKAVRTGRIWINTYNQVPEGAPFGGYKKSGIGRETYKGALSNYQQVKNIYIDTSNALKGLY.

212 to 218 (GKGSESG) is a binding site for NAD(+). Residues glutamate 256 and cysteine 290 contribute to the active site.

The protein belongs to the aldehyde dehydrogenase family.

It catalyses the reaction an aldehyde + NAD(+) + H2O = a carboxylate + NADH + 2 H(+). The polypeptide is Putative aldehyde dehydrogenase AldA (aldA) (Staphylococcus aureus (strain MRSA252)).